Reading from the N-terminus, the 202-residue chain is IMP cyclohydrolase (202 aa).

Belongs to the archaeal IMP cyclohydrolase family.

The catalysed reaction is IMP + H2O = 5-formamido-1-(5-phospho-D-ribosyl)imidazole-4-carboxamide. The protein operates within purine metabolism; IMP biosynthesis via de novo pathway; IMP from 5-formamido-1-(5-phospho-D-ribosyl)imidazole-4-carboxamide: step 1/1. Its function is as follows. Catalyzes the cyclization of 5-formylamidoimidazole-4-carboxamide ribonucleotide to IMP. The polypeptide is IMP cyclohydrolase (Methanothermobacter thermautotrophicus (strain ATCC 29096 / DSM 1053 / JCM 10044 / NBRC 100330 / Delta H) (Methanobacterium thermoautotrophicum)).